The chain runs to 529 residues: MSESSLQNEVAKRRTFAIISHPDAGKTTITEKVLLHGQQIQKAGTIKGKKSGQHAKSDWMQMEQERGISVTTSVMQFPYHNALVNLLDTPGHEDFSEDTYRTLTAVDSCLMVIDGAKGVEDRTIKLMEVTRLRDTPIITFMNKLDRDIRDPLELLDEVEDVLKIMCAPITWPIGSGKNFKGVYHLLKDETILYKTGQGHRIQEETIIKGLDNPELDEKLGVWADELREQIELVNGASNPFDKELFLAGELTPVFFGTALGNFGVDHMLDGLVDWAPKPQGRETDQQEGVSATSEDFSGFIFKIQANMDPRHRDRVAFMRIVSGKYEKGMKMRQVRTGKDVRISDALTFLAGDRSHVEEAYPGDIIGLHNHGTIQIGDTFTAGEDFKFSGIPNFAPELFRRIRLKDPLKQKQLLKGLVQLSEEGAVQVFRPLISNDLIVGAVGVLQFDVVVHRLRTEYKVDAMYENINVATARWVSSKDEKKLDEFRRRAEANLALDGGDNLTYIAPTMVNLSLAEERYPDIEFTHTREH.

Positions 11–279 (AKRRTFAIIS…GLVDWAPKPQ (269 aa)) constitute a tr-type G domain. GTP is bound by residues 20 to 27 (SHPDAGKT), 88 to 92 (DTPGH), and 142 to 145 (NKLD).

It belongs to the TRAFAC class translation factor GTPase superfamily. Classic translation factor GTPase family. PrfC subfamily.

The protein resides in the cytoplasm. Its function is as follows. Increases the formation of ribosomal termination complexes and stimulates activities of RF-1 and RF-2. It binds guanine nucleotides and has strong preference for UGA stop codons. It may interact directly with the ribosome. The stimulation of RF-1 and RF-2 is significantly reduced by GTP and GDP, but not by GMP. The protein is Peptide chain release factor 3 of Idiomarina loihiensis (strain ATCC BAA-735 / DSM 15497 / L2-TR).